Consider the following 313-residue polypeptide: MIIVTGGAGMIGSNIVKALNEAGINDILVVDNLKNGKKFKNLVDLDITDYMDRDDFLTQIMAGDDFGPIEAIFHEGACSATTEWDGKYMMLNNYEYSKELLHYCLDREIPFLYASSAATYGETETFVEEREYEGALNVYGYSKQQFDNYVRRLWKDAEEHGEQLSQITGFRYFNVYGPREDHKGSMASVAFHLNNQINAGENPKLFAGSESFKRDFVYVGDVCKVNLWFLENGVSGIFNCGTGRAESFEEVAKAVVKHHNKGEIQTIPFPDHLKGAYQEFTQADLTKLRAAGCDVEFKTVAEGVAEYLAIQNR.

NADP(+)-binding positions include 10–11 (MI), 31–32 (DN), Lys-38, Arg-53, 75–79 (EGACS), and Asn-92. Tyr-139 functions as the Proton acceptor in the catalytic mechanism. Residue Lys-143 coordinates NADP(+). Asn-174 provides a ligand contact to substrate. The NADP(+) site is built by Val-175 and Lys-183. Catalysis depends on Lys-183, which acts as the Proton acceptor. Residues Ser-185, His-192, 206 to 209 (FAGS), Arg-214, and Tyr-277 contribute to the substrate site.

This sequence belongs to the NAD(P)-dependent epimerase/dehydratase family. HldD subfamily. Homopentamer. The cofactor is NADP(+).

The enzyme catalyses ADP-D-glycero-beta-D-manno-heptose = ADP-L-glycero-beta-D-manno-heptose. Its pathway is nucleotide-sugar biosynthesis; ADP-L-glycero-beta-D-manno-heptose biosynthesis; ADP-L-glycero-beta-D-manno-heptose from D-glycero-beta-D-manno-heptose 7-phosphate: step 4/4. Functionally, catalyzes the interconversion between ADP-D-glycero-beta-D-manno-heptose and ADP-L-glycero-beta-D-manno-heptose via an epimerization at carbon 6 of the heptose. The sequence is that of ADP-L-glycero-D-manno-heptose-6-epimerase from Vibrio campbellii (strain ATCC BAA-1116).